Consider the following 247-residue polypeptide: Uroporphyrinogen-III C-methyltransferase (247 aa).

Residues P12, 117–118 (TA), M168, A197, and A225 each bind S-adenosyl-L-homocysteine.

It belongs to the precorrin methyltransferase family.

It catalyses the reaction uroporphyrinogen III + 2 S-adenosyl-L-methionine = precorrin-2 + 2 S-adenosyl-L-homocysteine + H(+). It functions in the pathway cofactor biosynthesis; adenosylcobalamin biosynthesis; precorrin-2 from uroporphyrinogen III: step 1/1. It participates in porphyrin-containing compound metabolism; siroheme biosynthesis; precorrin-2 from uroporphyrinogen III: step 1/1. Functionally, catalyzes the two successive C-2 and C-7 methylation reactions involved in the conversion of uroporphyrinogen III to precorrin-2 via the intermediate formation of precorrin-1. It is a step in the biosynthesis of both cobalamin (vitamin B12) and siroheme. This chain is Uroporphyrinogen-III C-methyltransferase, found in Pseudomonas fluorescens.